Here is a 444-residue protein sequence, read N- to C-terminus: tRNA modification GTPase MnmE (444 aa).

Positions 23, 82, and 121 each coordinate (6S)-5-formyl-5,6,7,8-tetrahydrofolate. Residues 216-365 form the TrmE-type G domain; that stretch reads GTSIVLAGLP…LKQALQKWLN (150 aa). Residue asparagine 226 participates in K(+) binding. Residues 226–231, 245–251, and 270–273 contribute to the GTP site; these read NAGKSS, TDIPGTT, and DSAG. Serine 230 contacts Mg(2+). Positions 245, 247, and 250 each coordinate K(+). Threonine 251 provides a ligand contact to Mg(2+). A (6S)-5-formyl-5,6,7,8-tetrahydrofolate-binding site is contributed by lysine 444.

Belongs to the TRAFAC class TrmE-Era-EngA-EngB-Septin-like GTPase superfamily. TrmE GTPase family. Homodimer. Heterotetramer of two MnmE and two MnmG subunits. The cofactor is K(+).

It is found in the cytoplasm. Functionally, exhibits a very high intrinsic GTPase hydrolysis rate. Involved in the addition of a carboxymethylaminomethyl (cmnm) group at the wobble position (U34) of certain tRNAs, forming tRNA-cmnm(5)s(2)U34. The protein is tRNA modification GTPase MnmE of Chlamydia trachomatis serovar L2 (strain ATCC VR-902B / DSM 19102 / 434/Bu).